Consider the following 532-residue polypeptide: UDP-glucuronosyltransferase 1A4 (532 aa).

The N-terminal stretch at 1–27 (MVLGVWITLWRLVRLLLLLCVLPWAEG) is a signal peptide. 2 N-linked (GlcNAc...) asparagine glycosylation sites follow: Asn141 and Asn295. The helical transmembrane segment at 490–506 (VIGFLLAIVLTVAFVTF) threads the bilayer.

The protein belongs to the UDP-glycosyltransferase family. In terms of assembly, homodimers. Homooligomer. Interacts with UGT1A1, UGT1A3, UGT1A6, UGT1A7, UGT1A8, UGT1A9 and UGT1A10 to form heterodimers.

It localises to the endoplasmic reticulum membrane. The enzyme catalyses glucuronate acceptor + UDP-alpha-D-glucuronate = acceptor beta-D-glucuronoside + UDP + H(+). It catalyses the reaction calcidiol + UDP-alpha-D-glucuronate = calcidiol 25-O-(beta-D-glucuronide) + UDP + H(+). It carries out the reaction calcidiol + UDP-alpha-D-glucuronate = calcidiol 3-O-(beta-D-glucuronide) + UDP + H(+). The catalysed reaction is calcitriol + UDP-alpha-D-glucuronate = calcitriol 25-O-(beta-D-glucuronide) + UDP + H(+). The enzyme catalyses (5Z,8Z,11Z,14Z)-eicosatetraenoate + UDP-alpha-D-glucuronate = O-[(5Z),(8Z),(11Z),(14Z)-eicosatetraenoyl]-beta-D-glucuronate + UDP. It catalyses the reaction 15-hydroxy-(5Z,8Z,11Z,13E)-eicosatetraenoate + UDP-alpha-D-glucuronate = 15-O-(beta-D-glucuronosyl)-(5Z,8Z,11Z,14Z)-eicosatetraenoate + UDP + H(+). It carries out the reaction 20-hydroxy-(5Z,8Z,11Z,14Z)-eicosatetraenoate + UDP-alpha-D-glucuronate = 20-O-(beta-D-glucuronosyl)-(5Z,8Z,11Z,14Z)-eicosatetraenoate + UDP + H(+). UDP-glucuronosyltransferase (UGT) that catalyzes phase II biotransformation reactions in which lipophilic substrates are conjugated with glucuronic acid to increase the metabolite's water solubility, thereby facilitating excretion into either the urine or bile. Essential for the elimination and detoxification of drugs, xenobiotics and endogenous compounds. Involved in the glucuronidation of calcidiol, which is the major circulating form of vitamin D3 essential for the regulation of calcium and phosphate homeostasis. Also glucuronidates the biologically active form of vitamin D3, calcitriol, probably leading to its biliary transport and intestinal reabsorption. Involved in the glucuronidation of arachidonic acid (AA) and AA-derived eicosanoids including 15-HETE, 20-HETE and PGB1. The protein is UDP-glucuronosyltransferase 1A4 (Ugt1a4) of Oryctolagus cuniculus (Rabbit).